Reading from the N-terminus, the 157-residue chain is MTDFSVWEAAPFGATVDHILQRYHNVHRAQFEELVPLAQKVAQVHADTFPAEIAGLLADMRDELLMHMMKEERMLFPMINQGVGRGAAMPISVMMHEHEEHDRAIARLKELTGNFHAPEGACGSWTRLYALAKEMADDLNDHIHLENDILFARVLDS.

The protein belongs to the RIC family.

Its subcellular location is the cytoplasm. Its function is as follows. Di-iron-containing protein involved in the repair of iron-sulfur clusters damaged by oxidative and nitrosative stress conditions. Required to repair damage caused by nitric oxide to FNR and NsrR transcription factors. The protein is Iron-sulfur cluster repair protein DnrN (dnrN) of Neisseria gonorrhoeae.